The following is a 115-amino-acid chain: Peptidyl-tRNA hydrolase (115 aa).

This sequence belongs to the PTH2 family.

It is found in the cytoplasm. The catalysed reaction is an N-acyl-L-alpha-aminoacyl-tRNA + H2O = an N-acyl-L-amino acid + a tRNA + H(+). Functionally, the natural substrate for this enzyme may be peptidyl-tRNAs which drop off the ribosome during protein synthesis. The chain is Peptidyl-tRNA hydrolase from Methanococcoides burtonii (strain DSM 6242 / NBRC 107633 / OCM 468 / ACE-M).